A 133-amino-acid polypeptide reads, in one-letter code: MSLNRHQIRESAFKIIFAKSANPDADLSELQDQVLEEFHETEAPDQFLKDLVMGVSLNLEAINETISGELKKGWTVKRLESPDRVILQMGTYEIKYTETPDKVAINEALELAKKYTDEDARKFINGVLSNIAK.

This sequence belongs to the NusB family.

Functionally, involved in transcription antitermination. Required for transcription of ribosomal RNA (rRNA) genes. Binds specifically to the boxA antiterminator sequence of the ribosomal RNA (rrn) operons. In Pediococcus pentosaceus (strain ATCC 25745 / CCUG 21536 / LMG 10740 / 183-1w), this protein is Transcription antitermination protein NusB.